Reading from the N-terminus, the 457-residue chain is MQKYFVEARQLLALAIPVIFAQIAQTSMGVVDTVMAGGYSATDMAAVAIGTSIWLPAILFGHGLLLALTPVIAQLNGSGRRDRIAHQVQQGFVLAGLVSVLIMLVLWNAGYIIHAMHNIDPVLANKAVNYLRALLWGAPGYLFFQVMRNQCEGLAKTTPGMAMGFIGLLVNIPVNYIFIYGHFGMPELGGVGCGVATASVYWVMFFCMRFWVKRAGSMRDIRPEPASRRFDWPVIRRLAQIGMPVALALFFEVTLFAVVALLVSPLGIVDVAGHQIALNFSSLMFVLPMSMSAAVTIRVGFRLGQGSTLEAQTSARTGIIVGICLAVLTALFTVVFREPIALLYNDNPEVVTLASHLMLLAAIYQISDSIQVIGSGVLRGYKDTRSIFFITFIAYWVLGLPSGYILGLTDWVVEPMGPAGFWFGFILGLTSAAIMMMWRMRYLQRQPSETILARAAR.

12 consecutive transmembrane segments (helical) span residues Leu11–Val31, Ile53–Ala73, Val93–Ile113, Ala127–Met147, Gly160–Tyr180, Leu188–Met208, Met243–Val263, Ile276–Thr296, Arg316–Phe336, Leu357–Val377, Ile387–Gly407, and Pro418–Trp438.

This sequence belongs to the multi antimicrobial extrusion (MATE) (TC 2.A.66.1) family. MdtK subfamily.

Its subcellular location is the cell inner membrane. Its function is as follows. Multidrug efflux pump that functions probably as a Na(+)/drug antiporter. The chain is Multidrug resistance protein MdtK from Cronobacter sakazakii (strain ATCC BAA-894) (Enterobacter sakazakii).